We begin with the raw amino-acid sequence, 108 residues long: Ig kappa chain V-V region MOPC 149 (108 aa).

The segment at 1-23 (DIQMTQSPDYLSASVGETVTITC) is framework-1. Residues C23 and C88 are joined by a disulfide bond. The tract at residues 24 to 34 (RASENIYSYLA) is complementarity-determining-1. The segment at 35–49 (WYQQKQGKSPQLLVY) is framework-2. The interval 50–56 (DAKTLVE) is complementarity-determining-2. The segment at 57 to 88 (GVPSRFSGSGSGTQFSLKINSLQPEDFGSYYC) is framework-3. The interval 89–97 (QHHYGIPFT) is complementarity-determining-3. The tract at residues 98–108 (FGSGTKLEIKR) is framework-4.

This is Ig kappa chain V-V region MOPC 149 from Mus musculus (Mouse).